The sequence spans 62 residues: Large ribosomal subunit protein bL28 (62 aa).

It belongs to the bacterial ribosomal protein bL28 family.

The chain is Large ribosomal subunit protein bL28 from Streptococcus uberis (strain ATCC BAA-854 / 0140J).